The chain runs to 729 residues: Polyribonucleotide nucleotidyltransferase (729 aa).

Mg(2+) contacts are provided by Asp509 and Asp515. The KH domain occupies 575–634 (PRVISVKIPVDKIGEVIGPKGKMINQIQADSGAEITVEDDGTIYIGAVDGPSAESARSAI). One can recognise an S1 motif domain in the interval 646-718 (GERYLGTIVK…SRGKISLSPS (73 aa)).

It belongs to the polyribonucleotide nucleotidyltransferase family. Mg(2+) is required as a cofactor.

The protein localises to the cytoplasm. The catalysed reaction is RNA(n+1) + phosphate = RNA(n) + a ribonucleoside 5'-diphosphate. Involved in mRNA degradation. Catalyzes the phosphorolysis of single-stranded polyribonucleotides processively in the 3'- to 5'-direction. This is Polyribonucleotide nucleotidyltransferase from Frankia casuarinae (strain DSM 45818 / CECT 9043 / HFP020203 / CcI3).